Reading from the N-terminus, the 214-residue chain is Cytochrome b (214 aa).

A run of 4 helical transmembrane segments spans residues 31–51, 75–96, 111–131, and 176–196; these read FGSM…FLAI, WIMQ…YIHI, WLSG…GYVL, and FFAL…LHIL. The heme b site is built by His-81 and His-95. Heme b-binding residues include His-180 and His-194. His-199 is an a ubiquinone binding site.

The protein belongs to the cytochrome b family. As to quaternary structure, the cytochrome bc1 complex contains 3 respiratory subunits (MT-CYB, CYC1 and UQCRFS1), 2 core proteins (UQCRC1 and UQCRC2) and probably 6 low-molecular weight proteins. Heme b serves as cofactor.

It localises to the mitochondrion inner membrane. In terms of biological role, component of the ubiquinol-cytochrome c reductase complex (complex III or cytochrome b-c1 complex) that is part of the mitochondrial respiratory chain. The b-c1 complex mediates electron transfer from ubiquinol to cytochrome c. Contributes to the generation of a proton gradient across the mitochondrial membrane that is then used for ATP synthesis. In Crotalus atrox (Western diamondback rattlesnake), this protein is Cytochrome b (MT-CYB).